The following is a 109-amino-acid chain: Hainantoxin-XVIII-3 (109 aa).

Residues 1–18 form the signal peptide; the sequence is MKLSIIIIATSLVIAVVA. Positions 19–46 are excised as a propeptide; it reads FPSKDSKAIENDKTEQRMEIVVQETARA. 4 disulfide bridges follow: cysteine 47/cysteine 62, cysteine 55/cysteine 68, cysteine 59/cysteine 108, and cysteine 61/cysteine 81.

It belongs to the neurotoxin 25 family. F7 subfamily. In terms of tissue distribution, expressed by the venom gland.

Its subcellular location is the secreted. Functionally, putative ion channel inhibitor. In Cyriopagopus hainanus (Chinese bird spider), this protein is Hainantoxin-XVIII-3.